Reading from the N-terminus, the 294-residue chain is Bifunctional protein FolD (294 aa).

Residues 166–168 (GRS), Ser195, and Ile236 contribute to the NADP(+) site.

The protein belongs to the tetrahydrofolate dehydrogenase/cyclohydrolase family. Homodimer.

It carries out the reaction (6R)-5,10-methylene-5,6,7,8-tetrahydrofolate + NADP(+) = (6R)-5,10-methenyltetrahydrofolate + NADPH. It catalyses the reaction (6R)-5,10-methenyltetrahydrofolate + H2O = (6R)-10-formyltetrahydrofolate + H(+). It participates in one-carbon metabolism; tetrahydrofolate interconversion. Catalyzes the oxidation of 5,10-methylenetetrahydrofolate to 5,10-methenyltetrahydrofolate and then the hydrolysis of 5,10-methenyltetrahydrofolate to 10-formyltetrahydrofolate. This Chloroherpeton thalassium (strain ATCC 35110 / GB-78) protein is Bifunctional protein FolD.